Here is a 972-residue protein sequence, read N- to C-terminus: UvrABC system protein A (972 aa).

32-39 is an ATP binding site; that stretch reads GLSGSGKS. The C4-type; atypical zinc finger occupies 257–285; it reads CPNGHALAVDDLEPRSFSFNSPYGACPEC. ABC transporter domains are found at residues 315–601 and 621–950; these read WSNG…KDSI and VDPR…KFLA. 654-661 is an ATP binding site; it reads GVSGSGKS. The segment at 753-779 adopts a C4-type zinc-finger fold; it reads CEACTGDGTIKIEMNFLPDVYVPCEVC.

This sequence belongs to the ABC transporter superfamily. UvrA family. In terms of assembly, forms a heterotetramer with UvrB during the search for lesions.

It localises to the cytoplasm. Its function is as follows. The UvrABC repair system catalyzes the recognition and processing of DNA lesions. UvrA is an ATPase and a DNA-binding protein. A damage recognition complex composed of 2 UvrA and 2 UvrB subunits scans DNA for abnormalities. When the presence of a lesion has been verified by UvrB, the UvrA molecules dissociate. The chain is UvrABC system protein A from Mycobacterium bovis (strain ATCC BAA-935 / AF2122/97).